The following is a 508-amino-acid chain: Photosystem II CP47 reaction center protein (508 aa).

6 helical membrane-spanning segments follow: residues Ala-21 to Ser-36, Ile-101 to Trp-115, Gly-140 to Phe-156, Ile-203 to Ser-218, Val-237 to Val-252, and Trp-457 to Arg-472.

Belongs to the PsbB/PsbC family. PsbB subfamily. As to quaternary structure, PSII is composed of 1 copy each of membrane proteins PsbA, PsbB, PsbC, PsbD, PsbE, PsbF, PsbH, PsbI, PsbJ, PsbK, PsbL, PsbM, PsbT, PsbX, PsbY, PsbZ, Psb30/Ycf12, at least 3 peripheral proteins of the oxygen-evolving complex and a large number of cofactors. It forms dimeric complexes. It depends on Binds multiple chlorophylls. PSII binds additional chlorophylls, carotenoids and specific lipids. as a cofactor.

It localises to the plastid. It is found in the chloroplast thylakoid membrane. In terms of biological role, one of the components of the core complex of photosystem II (PSII). It binds chlorophyll and helps catalyze the primary light-induced photochemical processes of PSII. PSII is a light-driven water:plastoquinone oxidoreductase, using light energy to abstract electrons from H(2)O, generating O(2) and a proton gradient subsequently used for ATP formation. This is Photosystem II CP47 reaction center protein from Nephroselmis olivacea (Green alga).